A 152-amino-acid chain; its full sequence is Aspartate 1-decarboxylase (152 aa).

The active-site Schiff-base intermediate with substrate; via pyruvic acid is the S24. The residue at position 24 (S24) is a Pyruvic acid (Ser). Residue T56 participates in substrate binding. The active-site Proton donor is the Y57. 72 to 74 (GAA) serves as a coordination point for substrate.

Belongs to the PanD family. In terms of assembly, heterooctamer of four alpha and four beta subunits. Requires pyruvate as cofactor. In terms of processing, is synthesized initially as an inactive proenzyme, which is activated by self-cleavage at a specific serine bond to produce a beta-subunit with a hydroxyl group at its C-terminus and an alpha-subunit with a pyruvoyl group at its N-terminus.

It is found in the cytoplasm. The enzyme catalyses L-aspartate + H(+) = beta-alanine + CO2. It participates in cofactor biosynthesis; (R)-pantothenate biosynthesis; beta-alanine from L-aspartate: step 1/1. In terms of biological role, catalyzes the pyruvoyl-dependent decarboxylation of aspartate to produce beta-alanine. In Rhodospirillum centenum (strain ATCC 51521 / SW), this protein is Aspartate 1-decarboxylase.